The sequence spans 363 residues: Histidine biosynthesis bifunctional protein HisB (363 aa).

Positions 1–174 (MTQPTLFIDR…AVTNIGDRQP (174 aa)) are histidinol-phosphatase. D9 acts as the Nucleophile in catalysis. 2 residues coordinate Mg(2+): D9 and D11. The active-site Proton donor is D11. Zn(2+) is bound by residues C92, H94, C100, and C102. D129 contributes to the Mg(2+) binding site. Residues 175-363 (RYAEVVRKTK…NELPSSKGVL (189 aa)) form an imidazoleglycerol-phosphate dehydratase region.

The protein in the N-terminal section; belongs to the histidinol-phosphatase family. It in the C-terminal section; belongs to the imidazoleglycerol-phosphate dehydratase family. Requires Mg(2+) as cofactor. Zn(2+) is required as a cofactor.

It localises to the cytoplasm. The catalysed reaction is D-erythro-1-(imidazol-4-yl)glycerol 3-phosphate = 3-(imidazol-4-yl)-2-oxopropyl phosphate + H2O. The enzyme catalyses L-histidinol phosphate + H2O = L-histidinol + phosphate. It functions in the pathway amino-acid biosynthesis; L-histidine biosynthesis; L-histidine from 5-phospho-alpha-D-ribose 1-diphosphate: step 6/9. Its pathway is amino-acid biosynthesis; L-histidine biosynthesis; L-histidine from 5-phospho-alpha-D-ribose 1-diphosphate: step 8/9. The protein is Histidine biosynthesis bifunctional protein HisB of Actinobacillus pleuropneumoniae serotype 5b (strain L20).